A 181-amino-acid chain; its full sequence is Peptide deformylase (181 aa).

Residues Cys99 and His141 each contribute to the Fe cation site. The active site involves Glu142. Fe cation is bound at residue His145.

It belongs to the polypeptide deformylase family. It depends on Fe(2+) as a cofactor.

The catalysed reaction is N-terminal N-formyl-L-methionyl-[peptide] + H2O = N-terminal L-methionyl-[peptide] + formate. Removes the formyl group from the N-terminal Met of newly synthesized proteins. Requires at least a dipeptide for an efficient rate of reaction. N-terminal L-methionine is a prerequisite for activity but the enzyme has broad specificity at other positions. The chain is Peptide deformylase from Chlamydia muridarum (strain MoPn / Nigg).